Consider the following 204-residue polypeptide: Ciliary microtubule inner protein 7 (204 aa).

Its subcellular location is the cell projection. It localises to the cilium. The protein is Ciliary microtubule inner protein 7 of Homo sapiens (Human).